A 471-amino-acid polypeptide reads, in one-letter code: Tryptophanase (471 aa).

3 positions are modified to N6-acetyllysine: K5, K115, and K156. K270 carries the post-translational modification N6-(pyridoxal phosphate)lysine. K450 is modified (N6-acetyllysine).

Belongs to the beta-eliminating lyase family. Homotetramer. Pyridoxal 5'-phosphate is required as a cofactor.

The catalysed reaction is L-tryptophan + H2O = indole + pyruvate + NH4(+). It functions in the pathway amino-acid degradation; L-tryptophan degradation via pyruvate pathway; indole and pyruvate from L-tryptophan: step 1/1. The chain is Tryptophanase from Escherichia coli (strain SMS-3-5 / SECEC).